The chain runs to 318 residues: Thymidylate synthase (318 aa).

DUMP contacts are provided by residues arginine 25 and 180 to 181; that span reads RR. Cysteine 200 acts as the Nucleophile in catalysis. DUMP-binding positions include 220 to 223, asparagine 231, and 261 to 263; these read RSAD and HIY. A (6R)-5,10-methylene-5,6,7,8-tetrahydrofolate-binding site is contributed by aspartate 223. Residue alanine 317 participates in (6R)-5,10-methylene-5,6,7,8-tetrahydrofolate binding.

This sequence belongs to the thymidylate synthase family. Bacterial-type ThyA subfamily. As to quaternary structure, homodimer.

It is found in the cytoplasm. It catalyses the reaction dUMP + (6R)-5,10-methylene-5,6,7,8-tetrahydrofolate = 7,8-dihydrofolate + dTMP. Its pathway is pyrimidine metabolism; dTTP biosynthesis. Its function is as follows. Catalyzes the reductive methylation of 2'-deoxyuridine-5'-monophosphate (dUMP) to 2'-deoxythymidine-5'-monophosphate (dTMP) while utilizing 5,10-methylenetetrahydrofolate (mTHF) as the methyl donor and reductant in the reaction, yielding dihydrofolate (DHF) as a by-product. This enzymatic reaction provides an intracellular de novo source of dTMP, an essential precursor for DNA biosynthesis. The chain is Thymidylate synthase from Ligilactobacillus salivarius (strain UCC118) (Lactobacillus salivarius).